The chain runs to 49 residues: Lectin alpha chain (49 aa).

The protein belongs to the leguminous lectin family. In terms of assembly, homotetramer. Post-translationally, the beta and gamma chains are produced by partial proteolytic processing of the lectin alpha chain by an asparaginyl endopeptidase. Mixture of 60% alpha lectin and 40% of its beta and gamma proteolytic fragments. As to expression, seed.

Functionally, D-mannose/D-glucose-binding lectin. This is Lectin alpha chain from Dioclea violacea.